We begin with the raw amino-acid sequence, 480 residues long: Glutamyl-tRNA(Gln) amidotransferase subunit A (480 aa).

Residues K76 and S151 each act as charge relay system in the active site. S175 functions as the Acyl-ester intermediate in the catalytic mechanism.

Belongs to the amidase family. GatA subfamily. In terms of assembly, heterotrimer of A, B and C subunits.

It carries out the reaction L-glutamyl-tRNA(Gln) + L-glutamine + ATP + H2O = L-glutaminyl-tRNA(Gln) + L-glutamate + ADP + phosphate + H(+). Allows the formation of correctly charged Gln-tRNA(Gln) through the transamidation of misacylated Glu-tRNA(Gln) in organisms which lack glutaminyl-tRNA synthetase. The reaction takes place in the presence of glutamine and ATP through an activated gamma-phospho-Glu-tRNA(Gln). The polypeptide is Glutamyl-tRNA(Gln) amidotransferase subunit A (Exiguobacterium sibiricum (strain DSM 17290 / CCUG 55495 / CIP 109462 / JCM 13490 / 255-15)).